An 809-amino-acid polypeptide reads, in one-letter code: Interleukin-4 receptor subunit alpha (809 aa).

The signal sequence occupies residues 1–25; that stretch reads MGCLCPGLTLPVSCLILVWAAGSGS. Over 26–231 the chain is Extracellular; that stretch reads VKVLRLTACF…NYYEQPLEQR (206 aa). A disulfide bond links Cys34 and Cys44. 2 N-linked (GlcNAc...) asparagine glycosylation sites follow: Asn53 and Asn71. Cys74 and Cys86 are disulfide-bonded. 3 N-linked (GlcNAc...) asparagine glycosylation sites follow: Asn112, Asn128, and Asn161. Positions 125–222 constitute a Fibronectin type-III domain; that stretch reads APQNLTVHAI…EWSPSTTWHN (98 aa). Residue Ser163 is modified to Phosphoserine. 2 N-linked (GlcNAc...) asparagine glycosylation sites follow: Asn175 and Asn208. Positions 211 to 215 match the WSXWS motif motif; sequence WSEWS. Residues 232-255 traverse the membrane as a helical segment; it reads LPLGVSISCVVILAICLSCYFSII. The Cytoplasmic segment spans residues 256 to 809; it reads KIKKEWWDQI…STGPTCTSAS (554 aa). Residues 261–269 carry the Box 1 motif motif; sequence WWDQIPNPA. 2 disordered regions span residues 369–397 and 441–468; these read ESEE…QEGR and SAGP…TLTQ. Residues 447 to 468 show a composition bias toward polar residues; it reads AASQGEEQPLNPESNPLATLTQ. Residue Tyr488 is modified to Phosphotyrosine. The segment at 514-536 is disordered; the sequence is LGQVDPSIPSAPQPSEPPTALQP. A phosphotyrosine mark is found at Tyr566, Tyr590, and Tyr618. The segment at 606-674 is disordered; the sequence is QSGVEASSGE…EPTVKGEDPR (69 aa). The ITIM motif motif lies at 695–700; that stretch reads IVYSAL.

This sequence belongs to the type I cytokine receptor family. Type 4 subfamily. The functional IL4 receptor is formed by initial binding of IL4 to IL4R. Subsequent recruitment to the complex of the common gamma chain, in immune cells, creates a type I receptor and, in non-immune cells, of IL13RA1 forms a type II receptor. IL4R can also interact with the IL13/IL13RA1 complex to form a similar type II receptor. Interacts with PIK3C3. Interacts with the SH2-containing phosphatases, PTPN6/SHIP1, PTPN11/SHIP2 and INPP5D/SHIP. Interacts with JAK1 through a Box 1-containing region; inhibited by SOCS5. Interacts with SOCS5; inhibits IL4 signaling. Interacts with JAK3. Interacts with CLM1. Interacts with IL13RA2. On IL4 binding, phosphorylated on tyrosine residues in the cytoplasmic domain.

The protein resides in the cell membrane. It localises to the secreted. Receptor for both interleukin 4 and interleukin 13. Couples to the JAK1/2/3-STAT6 pathway. The IL4 response is involved in promoting Th2 differentiation. The IL4/IL13 responses are involved in regulating IgE production and, chemokine and mucus production at sites of allergic inflammation. In certain cell types, can signal through activation of insulin receptor substrates, IRS1/IRS2. The chain is Interleukin-4 receptor subunit alpha (IL4R) from Equus caballus (Horse).